Here is a 205-residue protein sequence, read N- to C-terminus: MRSRRGLLIVLSRPSGVGKGTVRKELFSHEDTRFQYSISVTTRKPREGEVDGVDYFFKEREEFEEMIRNEKLLEWAEFVGNYYGTPIDYVEKTLQEGKDVFLEIEVQGAIQVKKAFPEGVFIFLAPPSLSELKSRIVGRGTETEDVIENRLTVAKEEIEMMDAYDYVVENDQVELACDRIKAIVVGEHCRRERVAKYYKEMTEGL.

Residues 6–185 form the Guanylate kinase-like domain; that stretch reads GLLIVLSRPS…ACDRIKAIVV (180 aa). 13-20 is a binding site for ATP; the sequence is RPSGVGKG.

This sequence belongs to the guanylate kinase family.

The protein localises to the cytoplasm. It catalyses the reaction GMP + ATP = GDP + ADP. Essential for recycling GMP and indirectly, cGMP. This is Guanylate kinase from Bacillus cereus (strain ATCC 14579 / DSM 31 / CCUG 7414 / JCM 2152 / NBRC 15305 / NCIMB 9373 / NCTC 2599 / NRRL B-3711).